Here is a 496-residue protein sequence, read N- to C-terminus: Probable cytosol aminopeptidase (496 aa).

The Mn(2+) site is built by lysine 266 and aspartate 271. Lysine 278 is a catalytic residue. The Mn(2+) site is built by aspartate 289, aspartate 348, and glutamate 350. Arginine 352 is a catalytic residue.

The protein belongs to the peptidase M17 family. Requires Mn(2+) as cofactor.

The protein localises to the cytoplasm. It catalyses the reaction Release of an N-terminal amino acid, Xaa-|-Yaa-, in which Xaa is preferably Leu, but may be other amino acids including Pro although not Arg or Lys, and Yaa may be Pro. Amino acid amides and methyl esters are also readily hydrolyzed, but rates on arylamides are exceedingly low.. The enzyme catalyses Release of an N-terminal amino acid, preferentially leucine, but not glutamic or aspartic acids.. Its function is as follows. Presumably involved in the processing and regular turnover of intracellular proteins. Catalyzes the removal of unsubstituted N-terminal amino acids from various peptides. This is Probable cytosol aminopeptidase from Pseudomonas syringae pv. syringae (strain B728a).